Consider the following 4144-residue polypeptide: DNA-dependent protein kinase catalytic subunit (4144 aa).

At K127 the chain carries N6-acetyllysine. The stretch at D298–V333 is one HEAT 1 repeat. 3 positions are modified to phosphoserine: S521, S851, and S903. The stretch at Q1014–S1050 is one HEAT 2 repeat. S1075 bears the Phosphoserine mark. K1219 carries the post-translational modification N6-acetyllysine. An interaction with C1D region spans residues L1516 to L1551. The tract at residues L1516–L1551 is leucine-zipper. The stretch at P1736–P1769 is one TPR 1 repeat. N6-acetyllysine is present on K1983. S2069 carries the phosphoserine; by autocatalysis modification. The residue at position 2271 (K2271) is an N6-acetyllysine. The KIP-binding stretch occupies residues L2448–R3228. T2547 is modified (phosphothreonine). Phosphothreonine; by autocatalysis is present on T2621. Position 2624 is a phosphoserine; by autocatalysis (S2624). 2 positions are modified to phosphothreonine; by autocatalysis: T2650 and T2659. The segment at A2697–D2729 is disordered. Positions F2716–D2729 are enriched in basic and acidic residues. A may split the end of the DNA molecule, with the two strands separating around the region region spans residues E2753–H2781. At S2805 the chain carries Phosphoserine. 3 TPR repeats span residues P2903–D2935, V2936–G2964, and T2965–V2998. In terms of domain architecture, FAT spans P2922 to S3555. Phosphoserine is present on S3221. N6-acetyllysine occurs at positions 3257, 3276, 3654, and 3658. The stretch at L3711–I3748 is one TPR 5 repeat. The region spanning F3738–G4069 is the PI3K/PI4K catalytic domain. The interval V3744 to K3750 is G-loop. Phosphoserine occurs at positions 3747 and 3837. Residues G3935–N3943 form a catalytic loop region. An activation loop region spans residues G3955 to T3980. S4042 carries the phosphoserine modification. The FATC domain occupies N4112–M4144.

Belongs to the PI3/PI4-kinase family. DNA-PK is a heterotrimer of PRKDC and the Ku dimer (composed of XRCC6/Ku70 and XRCC5/Ku86). Formation of this complex may be promoted by interaction with ILF3. Component of the core long-range non-homologous end joining (NHEJ) complex (also named DNA-PK complex) composed of PRKDC, LIG4, XRCC4, XRCC6/Ku70, XRCC5/Ku86 and NHEJ1/XLF. Additional component of the NHEJ complex includes PAXX. Following autophosphorylation, PRKDC dissociates from DNA. Interacts with DNA-PKcs-interacting protein (KIP) with the region upstream the kinase domain. PRKDC alone also interacts with and phosphorylates DCLRE1C, thereby activating the latent endonuclease activity of this protein. Interacts with C1D. Interacts with TTI1 and TELO2. Interacts with CIB1. Interacts with SETX. Interacts with NR4A3; the DNA-dependent protein kinase complex DNA-PK phosphorylates and activates NR4A3 and prevents NR4A3 ubiquitination and degradation. Interacts with BRAT1. Part of the HDP-RNP complex composed of at least HEXIM1, PRKDC, XRCC5, XRCC6, paraspeckle proteins (SFPQ, NONO, PSPC1, RBM14, and MATR3) and NEAT1 RNA. Interacts with KAT5. Autophosphorylated at two clusters, the T2609 cluster and the S2056 cluster. Autophosphorylated on Ser-2069, Thr-2621, Thr-2650 and Thr-2659. Ser-2069 and Thr-2621 are DNA damage-inducible phosphorylation sites (inducible with ionizing radiation, IR) dephosphorylated by PPP5C. Autophosphorylation induces a conformational change that leads to remodeling of the DNA-PK complex, requisite for efficient end processing and DNA repair. Autophosphorylation in trans within DNA-PK complexes loaded on DNA ends leads to the dissociation of PRKDC from DNA and the transition into the short-range NHEJ complex. Autophosphorylation of the T2609 cluster is required for hematopoietic development and protein synthesis in erythrocytes precursors. Post-translationally, S-nitrosylated by GAPDH. In terms of processing, polyubiquitinated by RNF144A, leading to proteasomal degradation.

Its subcellular location is the nucleus. The protein localises to the nucleolus. It localises to the cytoplasm. The protein resides in the cytosol. It carries out the reaction L-seryl-[protein] + ATP = O-phospho-L-seryl-[protein] + ADP + H(+). The enzyme catalyses L-threonyl-[protein] + ATP = O-phospho-L-threonyl-[protein] + ADP + H(+). With respect to regulation, activity seems to be attenuated by autophosphorylation. Binding to the SL1 region of U3 small nucleolar RNA promotes auto-phosphorylation activity. Inhibited by wortmannin. Its function is as follows. Serine/threonine-protein kinase that acts as a molecular sensor for DNA damage. Involved in DNA non-homologous end joining (NHEJ) required for double-strand break (DSB) repair and V(D)J recombination. Must be bound to DNA to express its catalytic properties. Promotes processing of hairpin DNA structures in V(D)J recombination by activation of the hairpin endonuclease artemis (DCLRE1C). Recruited by XRCC5 and XRCC6 to DNA ends and is required to (1) protect and align broken ends of DNA, thereby preventing their degradation, (2) and sequester the DSB for repair by NHEJ. Acts as a scaffold protein to aid the localization of DNA repair proteins to the site of damage. The assembly of the DNA-PK complex at DNA ends is also required for the NHEJ ligation step. Found at the ends of chromosomes, suggesting a further role in the maintenance of telomeric stability and the prevention of chromosomal end fusion. Also involved in modulation of transcription. As part of the DNA-PK complex, involved in the early steps of ribosome assembly by promoting the processing of precursor rRNA into mature 18S rRNA in the small-subunit processome. Binding to U3 small nucleolar RNA, recruits PRKDC and XRCC5/Ku86 to the small-subunit processome. Recognizes the substrate consensus sequence [ST]-Q. Phosphorylates 'Ser-139' of histone variant H2AX, thereby regulating DNA damage response mechanism. Phosphorylates ASF1A, DCLRE1C, c-Abl/ABL1, histone H1, HSPCA, c-jun/JUN, p53/TP53, PARP1, POU2F1, DHX9, FH, SRF, NHEJ1/XLF, XRCC1, XRCC4, XRCC5, XRCC6, WRN, MYC and RFA2. Can phosphorylate C1D not only in the presence of linear DNA but also in the presence of supercoiled DNA. Ability to phosphorylate p53/TP53 in the presence of supercoiled DNA is dependent on C1D. Acts as a regulator of the phosphatidylinositol 3-kinase/protein kinase B signal transduction by mediating phosphorylation of 'Ser-473' of protein kinase B (PKB/AKT1, PKB/AKT2, PKB/AKT3), promoting their activation. Contributes to the determination of the circadian period length by antagonizing phosphorylation of CRY1 'Ser-588' and increasing CRY1 protein stability, most likely through an indirect mechanism. Plays a role in the regulation of DNA virus-mediated innate immune response by assembling into the HDP-RNP complex, a complex that serves as a platform for IRF3 phosphorylation and subsequent innate immune response activation through the cGAS-STING pathway. Also regulates the cGAS-STING pathway by catalyzing phosphorylation of CGAS, thereby impairing CGAS oligomerization and activation. Also regulates the cGAS-STING pathway by mediating phosphorylation of PARP1. The sequence is that of DNA-dependent protein kinase catalytic subunit (PRKDC) from Canis lupus familiaris (Dog).